The following is a 102-amino-acid chain: Small ribosomal subunit protein bS18c (102 aa).

Residues 1-19 (MDKTKRPLRKSKRSFRRRL) show a composition bias toward basic residues. The interval 1-26 (MDKTKRPLRKSKRSFRRRLPPPIGSG) is disordered.

Belongs to the bacterial ribosomal protein bS18 family. Part of the 30S ribosomal subunit.

It localises to the plastid. The protein localises to the chloroplast. In Piper cenocladum (Ant piper), this protein is Small ribosomal subunit protein bS18c.